A 251-amino-acid chain; its full sequence is Flap endonuclease Xni (251 aa).

Asp-104 is a binding site for Mg(2+). A 5'-3' exonuclease domain is found at 160–250 (VQPQQLPDYW…DGNLQQLRLK (91 aa)). 5 residues coordinate K(+): Leu-171, Ala-172, Pro-180, Val-182, and Ile-185. Positions 184 to 189 (GIGPKS) are interaction with DNA.

The protein belongs to the Xni family. The cofactor is Mg(2+). K(+) is required as a cofactor.

Its function is as follows. Has flap endonuclease activity. During DNA replication, flap endonucleases cleave the 5'-overhanging flap structure that is generated by displacement synthesis when DNA polymerase encounters the 5'-end of a downstream Okazaki fragment. The protein is Flap endonuclease Xni of Escherichia fergusonii (strain ATCC 35469 / DSM 13698 / CCUG 18766 / IAM 14443 / JCM 21226 / LMG 7866 / NBRC 102419 / NCTC 12128 / CDC 0568-73).